Here is a 319-residue protein sequence, read N- to C-terminus: Transaldolase (319 aa).

K131 (schiff-base intermediate with substrate) is an active-site residue.

This sequence belongs to the transaldolase family. Type 1 subfamily. Homodimer.

It localises to the cytoplasm. It catalyses the reaction D-sedoheptulose 7-phosphate + D-glyceraldehyde 3-phosphate = D-erythrose 4-phosphate + beta-D-fructose 6-phosphate. Its pathway is carbohydrate degradation; pentose phosphate pathway; D-glyceraldehyde 3-phosphate and beta-D-fructose 6-phosphate from D-ribose 5-phosphate and D-xylulose 5-phosphate (non-oxidative stage): step 2/3. Functionally, transaldolase is important for the balance of metabolites in the pentose-phosphate pathway. The chain is Transaldolase from Wigglesworthia glossinidia brevipalpis.